The chain runs to 359 residues: Dual-specificity RNA methyltransferase RlmN (359 aa).

Residue E86 is the Proton acceptor of the active site. The Radical SAM core domain maps to E105 to D338. A disulfide bridge links C112 with C343. The [4Fe-4S] cluster site is built by C119, C123, and C126. S-adenosyl-L-methionine is bound by residues G169–E170, S201, S224–H226, and N300. C343 acts as the S-methylcysteine intermediate in catalysis.

This sequence belongs to the radical SAM superfamily. RlmN family. [4Fe-4S] cluster serves as cofactor.

It localises to the cytoplasm. It carries out the reaction adenosine(2503) in 23S rRNA + 2 reduced [2Fe-2S]-[ferredoxin] + 2 S-adenosyl-L-methionine = 2-methyladenosine(2503) in 23S rRNA + 5'-deoxyadenosine + L-methionine + 2 oxidized [2Fe-2S]-[ferredoxin] + S-adenosyl-L-homocysteine. The catalysed reaction is adenosine(37) in tRNA + 2 reduced [2Fe-2S]-[ferredoxin] + 2 S-adenosyl-L-methionine = 2-methyladenosine(37) in tRNA + 5'-deoxyadenosine + L-methionine + 2 oxidized [2Fe-2S]-[ferredoxin] + S-adenosyl-L-homocysteine. Specifically methylates position 2 of adenine 2503 in 23S rRNA and position 2 of adenine 37 in tRNAs. m2A2503 modification seems to play a crucial role in the proofreading step occurring at the peptidyl transferase center and thus would serve to optimize ribosomal fidelity. This Wolinella succinogenes (strain ATCC 29543 / DSM 1740 / CCUG 13145 / JCM 31913 / LMG 7466 / NCTC 11488 / FDC 602W) (Vibrio succinogenes) protein is Dual-specificity RNA methyltransferase RlmN.